The sequence spans 176 residues: tRNA (cytidine(56)-2'-O)-methyltransferase (176 aa).

Residues leucine 86 and 111 to 115 (GAEKV) contribute to the S-adenosyl-L-methionine site.

The protein belongs to the aTrm56 family. In terms of assembly, homodimer.

Its subcellular location is the cytoplasm. The enzyme catalyses cytidine(56) in tRNA + S-adenosyl-L-methionine = 2'-O-methylcytidine(56) in tRNA + S-adenosyl-L-homocysteine + H(+). In terms of biological role, specifically catalyzes the AdoMet-dependent 2'-O-ribose methylation of cytidine at position 56 in tRNAs. The polypeptide is tRNA (cytidine(56)-2'-O)-methyltransferase (Methanoregula boonei (strain DSM 21154 / JCM 14090 / 6A8)).